A 570-amino-acid chain; its full sequence is Proline--tRNA ligase (570 aa).

This sequence belongs to the class-II aminoacyl-tRNA synthetase family. ProS type 1 subfamily. In terms of assembly, homodimer.

The protein localises to the cytoplasm. It carries out the reaction tRNA(Pro) + L-proline + ATP = L-prolyl-tRNA(Pro) + AMP + diphosphate. Functionally, catalyzes the attachment of proline to tRNA(Pro) in a two-step reaction: proline is first activated by ATP to form Pro-AMP and then transferred to the acceptor end of tRNA(Pro). As ProRS can inadvertently accommodate and process non-cognate amino acids such as alanine and cysteine, to avoid such errors it has two additional distinct editing activities against alanine. One activity is designated as 'pretransfer' editing and involves the tRNA(Pro)-independent hydrolysis of activated Ala-AMP. The other activity is designated 'posttransfer' editing and involves deacylation of mischarged Ala-tRNA(Pro). The misacylated Cys-tRNA(Pro) is not edited by ProRS. The chain is Proline--tRNA ligase from Neisseria meningitidis serogroup C / serotype 2a (strain ATCC 700532 / DSM 15464 / FAM18).